Consider the following 775-residue polypeptide: Glutamine--tRNA ligase (775 aa).

Ala2 carries the N-acetylalanine modification. Ser70 carries the phosphoserine modification. The 'HIGH' region signature appears at 270–280; that stretch reads PEPNGILHIGH. ATP contacts are provided by residues 271-273 and 277-283; these read EPN and HIGHAKA. Asp303 is an L-glutamine binding site. Lys309 bears the N6-acetyllysine mark. Residue Tyr438 participates in L-glutamine binding. ATP contacts are provided by residues Thr457, 486-487, and 494-496; these read RL and VSK. The 'KMSKS' region motif lies at 493 to 497; sequence VVSKR. Ser495 carries the post-translational modification Phosphoserine.

Belongs to the class-I aminoacyl-tRNA synthetase family. Monomer. Part of a multisubunit complex that groups tRNA ligases for Arg (RARS1), Asp (DARS1), Gln (QARS1), Ile (IARS1), Leu (LARS1), Lys (KARS1), Met (MARS1) the bifunctional ligase for Glu and Pro (EPRS1) and the auxiliary subunits AIMP1/p43, AIMP2/p38 and EEF1E1/p18. Interacts with RARS1. Part of a complex composed of RARS1, QARS1 and AIMP1.

The protein localises to the cytoplasm. Its subcellular location is the cytosol. It carries out the reaction tRNA(Gln) + L-glutamine + ATP = L-glutaminyl-tRNA(Gln) + AMP + diphosphate. Functionally, glutamine--tRNA ligase. Plays a critical role in brain development. This is Glutamine--tRNA ligase (QARS1) from Bos taurus (Bovine).